The sequence spans 448 residues: DEAD-box ATP-dependent RNA helicase CshB (448 aa).

The Q motif motif lies at 4–32 (HPFEQFNLESSLIDAVKDLNFEKPTEIQN). One can recognise a Helicase ATP-binding domain in the interval 35–206 (IPRILKRTNL…NKYLSHPEYV (172 aa)). 48–55 (SQTGTGKS) lines the ATP pocket. The DEAD box signature appears at 154 to 157 (DEAD). Residues 236-386 (NLIDILNPYL…EVKAHNQRQA (151 aa)) enclose the Helicase C-terminal domain. Basic residues predominate over residues 400–418 (NKVRSKIKNKVKPGYKKKF). The tract at residues 400–448 (NKVRSKIKNKVKPGYKKKFKQEVEKMKRQERKQFSKQQNRQKRKQNKKG) is disordered. Positions 419–432 (KQEVEKMKRQERKQ) are enriched in basic and acidic residues. Basic residues predominate over residues 438 to 448 (NRQKRKQNKKG).

This sequence belongs to the DEAD box helicase family. CshB subfamily.

The protein localises to the cytoplasm. It carries out the reaction ATP + H2O = ADP + phosphate + H(+). Functionally, probable DEAD-box RNA helicase. May work in conjunction with the cold shock proteins to ensure proper initiation of transcription at low and optimal temperatures. This Staphylococcus aureus (strain NCTC 8325 / PS 47) protein is DEAD-box ATP-dependent RNA helicase CshB.